We begin with the raw amino-acid sequence, 801 residues long: Xaa-Pro dipeptidyl-peptidase (801 aa).

Residues Ser-371, Asp-491, and His-522 each act as charge relay system in the active site.

Belongs to the peptidase S15 family. In terms of assembly, homodimer.

The protein localises to the cytoplasm. It catalyses the reaction Hydrolyzes Xaa-Pro-|- bonds to release unblocked, N-terminal dipeptides from substrates including Ala-Pro-|-p-nitroanilide and (sequentially) Tyr-Pro-|-Phe-Pro-|-Gly-Pro-|-Ile.. Its function is as follows. Removes N-terminal dipeptides sequentially from polypeptides having unsubstituted N-termini provided that the penultimate residue is proline. The sequence is that of Xaa-Pro dipeptidyl-peptidase from Ligilactobacillus salivarius (strain UCC118) (Lactobacillus salivarius).